The chain runs to 670 residues: Small ribosomal subunit protein mS39 (670 aa).

The transit peptide at 1–13 (MAAPCVRLGSVRC) directs the protein to the mitochondrion. PPR repeat units lie at residues 129–163 (VEGV…GTAP), 164–199 (SLET…EVQD), 209–239 (RPRQ…MPER), 240–274 (NAHS…RLTA), 275–314 (DVQT…NVRP), 315–351 (NLLT…NIEP), 352–392 (SLAT…FTLR), 396–430 (DVYF…DNRG), 438–472 (QSTY…LYYP), 473–507 (NSRG…GHSN), and 556–590 (SAGS…HRVP). The interval 187–213 (IQTSEQEQQEVQDQQETEDPKKRPRQY) is disordered. The span at 193-203 (EQQEVQDQQET) shows a compositional bias: acidic residues. The tract at residues 648-670 (EDLQKSHSSSSSSSSSSSDSDRE) is disordered. A compositionally biased stretch (low complexity) spans 653–670 (SHSSSSSSSSSSSDSDRE).

The protein belongs to the mitochondrion-specific ribosomal protein mS39 family.

The protein resides in the mitochondrion. In terms of biological role, mitochondrial protein that may have a role in mitochondrial translation. The sequence is that of Small ribosomal subunit protein mS39 (ptcd3) from Xenopus tropicalis (Western clawed frog).